Reading from the N-terminus, the 1040-residue chain is Vacuolar membrane protease (1040 aa).

Over M1–P9 the chain is Cytoplasmic. Residues G10–I30 form a helical membrane-spanning segment. Topologically, residues N31 to M405 are vacuolar. N-linked (GlcNAc...) asparagine glycosylation is found at N48, N117, N120, and N129. Zn(2+) is bound by residues H186 and D198. The active-site Proton acceptor is the E232. Residues E233, E258, and H331 each coordinate Zn(2+). Residues F406–L426 form a helical membrane-spanning segment. Topologically, residues L427–F436 are cytoplasmic. The chain crosses the membrane as a helical span at residues T437–W456. The Vacuolar segment spans residues K457 to W462. A helical transmembrane segment spans residues A463–V483. Over R484–R490 the chain is Cytoplasmic. Residues G491–L511 traverse the membrane as a helical segment. Residues E512–Y521 are Vacuolar-facing. A helical transmembrane segment spans residues I522–L542. Residues A543–H715 lie on the Cytoplasmic side of the membrane. A disordered region spans residues H563–T680. 2 stretches are compositionally biased toward low complexity: residues S577 to P594 and A616 to P626. The span at G636–T647 shows a compositional bias: polar residues. Residues D650 to A661 are compositionally biased toward acidic residues. A helical membrane pass occupies residues L716–A736. The Vacuolar segment spans residues A737–F758. Residues T759–I779 traverse the membrane as a helical segment. Topologically, residues H780–H785 are cytoplasmic. The helical transmembrane segment at I786–P806 threads the bilayer. Residues F807 to V1040 are Vacuolar-facing. The N-linked (GlcNAc...) asparagine glycan is linked to N900.

It belongs to the peptidase M28 family. Zn(2+) is required as a cofactor.

Its subcellular location is the vacuole membrane. Its function is as follows. May be involved in vacuolar sorting and osmoregulation. The protein is Vacuolar membrane protease of Sordaria macrospora (strain ATCC MYA-333 / DSM 997 / K(L3346) / K-hell).